Here is a 356-residue protein sequence, read N- to C-terminus: Protein pelota homolog (356 aa).

This sequence belongs to the eukaryotic release factor 1 family. Pelota subfamily. As to quaternary structure, monomer. It depends on a divalent metal cation as a cofactor.

Its subcellular location is the cytoplasm. Its function is as follows. May function in recognizing stalled ribosomes, interact with stem-loop structures in stalled mRNA molecules, and effect endonucleolytic cleavage of the mRNA. May play a role in the release non-functional ribosomes and degradation of damaged mRNAs. Has endoribonuclease activity. The chain is Protein pelota homolog from Aeropyrum pernix (strain ATCC 700893 / DSM 11879 / JCM 9820 / NBRC 100138 / K1).